A 577-amino-acid chain; its full sequence is MASQTSAPAEPAPMPSPEAKTTEGASSYDQADMETKHAGSPCPPKQKSWLARHFSLLLRRDRQAQKAGQLFSGLLALNVVFLGGAFICSMIFNKVSVTLGDVWILLAALKVLSLLWLLYYTVGTTRKPHAVLYRDPHAGPIWVRGSLVLFGSCTVCLNIFRMGYDVSHIHCKSEVELIFPAIEIVFMIIQTWVLWRHCKDCVQVQTNFTRCGLMLTLATNLLMWVLAVTNDSMHREIEAELDALMEKFSGNGTNTCMCLNTTVCEVFRKGYLMLYPFSTEYCLICCAVLFVMWKNVSRSLAAHTGAHPNRSPFRLHGTIFGPLLGLLALVAGVCVFVLFQIEASGPDIARQYFTLYYAFYVAVLPTMSLACLAGTAIHGLEERELDTLKNPTRSLDVVLLMGAALGQMGIAYFSIVAIVATQPHELLNQLILAYSLLLILQHITQNLFIIEGLHRRPLWEPAVSGVMEKQDVELPRRGSLRELGQDLRRASRAYIHSFSHLNWKRRMLKEISLFLILCNITLWMMPAFGIHPEFENGLEKDFYGYRTWFTIVNFGLPLGVFYRMHSVGGLVEVYLGA.

The disordered stretch occupies residues 1-46; sequence MASQTSAPAEPAPMPSPEAKTTEGASSYDQADMETKHAGSPCPPKQ. Residues 1-69 lie on the Cytoplasmic side of the membrane; sequence MASQTSAPAE…RDRQAQKAGQ (69 aa). Residues 70–90 traverse the membrane as a helical segment; the sequence is LFSGLLALNVVFLGGAFICSM. The Extracellular segment spans residues 91–100; sequence IFNKVSVTLG. Residues 101–124 form a helical membrane-spanning segment; the sequence is DVWILLAALKVLSLLWLLYYTVGT. Residues 125–140 lie on the Cytoplasmic side of the membrane; that stretch reads TRKPHAVLYRDPHAGP. A helical membrane pass occupies residues 141 to 162; that stretch reads IWVRGSLVLFGSCTVCLNIFRM. Over 163 to 174 the chain is Extracellular; sequence GYDVSHIHCKSE. The helical transmembrane segment at 175-198 threads the bilayer; that stretch reads VELIFPAIEIVFMIIQTWVLWRHC. Over 199-206 the chain is Cytoplasmic; sequence KDCVQVQT. A helical membrane pass occupies residues 207–229; sequence NFTRCGLMLTLATNLLMWVLAVT. The Extracellular segment spans residues 230–276; that stretch reads NDSMHREIEAELDALMEKFSGNGTNTCMCLNTTVCEVFRKGYLMLYP. Residues 277–293 traverse the membrane as a helical segment; the sequence is FSTEYCLICCAVLFVMW. The Cytoplasmic portion of the chain corresponds to 294 to 319; the sequence is KNVSRSLAAHTGAHPNRSPFRLHGTI. The helical transmembrane segment at 320-339 threads the bilayer; the sequence is FGPLLGLLALVAGVCVFVLF. Over 340–353 the chain is Extracellular; the sequence is QIEASGPDIARQYF. A helical membrane pass occupies residues 354-376; the sequence is TLYYAFYVAVLPTMSLACLAGTA. At 377-394 the chain is on the cytoplasmic side; it reads IHGLEERELDTLKNPTRS. A helical transmembrane segment spans residues 395 to 416; it reads LDVVLLMGAALGQMGIAYFSIV. At 417-427 the chain is on the extracellular side; that stretch reads AIVATQPHELL. Residues 428–450 traverse the membrane as a helical segment; that stretch reads NQLILAYSLLLILQHITQNLFII. Residues 451-510 lie on the Cytoplasmic side of the membrane; it reads EGLHRRPLWEPAVSGVMEKQDVELPRRGSLRELGQDLRRASRAYIHSFSHLNWKRRMLKE. The chain crosses the membrane as a helical span at residues 511–528; it reads ISLFLILCNITLWMMPAF. Topologically, residues 529–547 are extracellular; it reads GIHPEFENGLEKDFYGYRT. The chain crosses the membrane as a helical span at residues 548-570; it reads WFTIVNFGLPLGVFYRMHSVGGL. Residues 571–577 are Cytoplasmic-facing; the sequence is VEVYLGA.

Belongs to the otopetrin family. In terms of assembly, homodimer. Expressed in epidermis, small intestine, stomach and retina.

The protein localises to the cell membrane. It carries out the reaction H(+)(in) = H(+)(out). With respect to regulation, activated by extracellular acidification. Activated by Zn(2+) under non-acidic conditions. In terms of biological role, proton-selective channel gated by extracellular protons. The chain is Proton channel OTOP3 from Mus musculus (Mouse).